We begin with the raw amino-acid sequence, 445 residues long: UPF0761 membrane protein Mlg_0521 (445 aa).

The next 6 helical transmembrane spans lie at 56 to 76 (LLAL…FPVF), 112 to 132 (GLTV…MAAI), 152 to 172 (FMVY…SLGI), 195 to 215 (LLAG…YAAV), 225 to 245 (ALLG…GFGW), and 259 to 279 (ALAA…VVLV).

The protein belongs to the UPF0761 family.

Its subcellular location is the cell inner membrane. The polypeptide is UPF0761 membrane protein Mlg_0521 (Alkalilimnicola ehrlichii (strain ATCC BAA-1101 / DSM 17681 / MLHE-1)).